Consider the following 485-residue polypeptide: Otoconin-90 (485 aa).

The N-terminal stretch at 1–17 (MIMLLMVGMLMAPCVGA) is a signal peptide. N-linked (GlcNAc...) asparagine glycosylation is present at asparagine 37. The tract at residues 75 to 189 (LLQFVNSMRC…SLNFLDASFC (115 aa)) is phospholipase A2-like 1. Cystine bridges form between cysteine 84/cysteine 144, cysteine 98/cysteine 189, cysteine 100/cysteine 116, cysteine 115/cysteine 171, cysteine 122/cysteine 164, cysteine 131/cysteine 157, and cysteine 151/cysteine 162. 2 N-linked (GlcNAc...) asparagine glycosylation sites follow: asparagine 178 and asparagine 288. Phospholipase A2-like stretches follow at residues 315–371 (MLQL…QVGC) and 383–435 (CEDH…PVSC). Residue asparagine 417 is glycosylated (N-linked (GlcNAc...) asparagine). The tract at residues 444-485 (LASSVDSSSEENSEEAPPQMERLRRFLEKPPGPLGARPLGGK) is disordered.

Belongs to the phospholipase A2 family. As to quaternary structure, interacts with OTOL1. In terms of tissue distribution, in the embryo, highly expressed in the developing otocyst with weak expression in the brain. Also expressed in nonsensory epithelia of both the vestibular and cochlear portions of the developing inner ear. Not expressed in adult or embryonic macular sensory epithelia.

The protein resides in the secreted. Major protein of the otoconia, a calcium carbonate structure in the saccule and utricle of the ear. Together with OTOL1, acts as a scaffold for otoconia biomineralization: sequesters calcium and forms interconnecting fibrils between otoconia that are incorporated into the calcium crystal structure. Together with OTOL1, modulates calcite crystal morphology and growth kinetics. It is unlikely that this protein has phospholipase A2 activity. This is Otoconin-90 from Mus musculus (Mouse).